We begin with the raw amino-acid sequence, 150 residues long: Lipoprotein signal peptidase (150 aa).

The next 2 membrane-spanning stretches (helical) occupy residues 58-78 and 85-107; these read FFIIVSIILILFLCYMIFKST and SFSLIVGGAIGNLFDRIVKGYVV. Active-site residues include Asp-108 and Asp-122. Residues 117–137 traverse the membrane as a helical segment; the sequence is VFNLADFFITGGVLLLTFLIL.

Belongs to the peptidase A8 family.

The protein resides in the cell membrane. The enzyme catalyses Release of signal peptides from bacterial membrane prolipoproteins. Hydrolyzes -Xaa-Yaa-Zaa-|-(S,diacylglyceryl)Cys-, in which Xaa is hydrophobic (preferably Leu), and Yaa (Ala or Ser) and Zaa (Gly or Ala) have small, neutral side chains.. The protein operates within protein modification; lipoprotein biosynthesis (signal peptide cleavage). Functionally, this protein specifically catalyzes the removal of signal peptides from prolipoproteins. The chain is Lipoprotein signal peptidase from Caldicellulosiruptor bescii (strain ATCC BAA-1888 / DSM 6725 / KCTC 15123 / Z-1320) (Anaerocellum thermophilum).